The following is a 370-amino-acid chain: Isopentenyl-diphosphate delta-isomerase (370 aa).

A substrate-binding site is contributed by 8 to 9 (RK). FMN is bound by residues Thr-65, 66-68 (GMT), Ser-99, and Asn-127. Residue 99 to 101 (SQR) coordinates substrate. Gln-166 is a substrate binding site. Glu-167 is a Mg(2+) binding site. Residues Lys-198, Ser-223, Thr-228, 277 to 279 (GMR), and 298 to 299 (AL) each bind FMN.

The protein belongs to the IPP isomerase type 2 family. Homooctamer. Dimer of tetramers. FMN serves as cofactor. Requires NADPH as cofactor. The cofactor is Mg(2+).

The protein resides in the cytoplasm. It catalyses the reaction isopentenyl diphosphate = dimethylallyl diphosphate. In terms of biological role, involved in the biosynthesis of isoprenoids. Catalyzes the 1,3-allylic rearrangement of the homoallylic substrate isopentenyl (IPP) to its allylic isomer, dimethylallyl diphosphate (DMAPP). This is Isopentenyl-diphosphate delta-isomerase from Pyrococcus abyssi (strain GE5 / Orsay).